Consider the following 170-residue polypeptide: Inner membrane protein p22 (170 aa).

Topologically, residues 1–3 are intravirion; it reads MST. The helical transmembrane segment at 4–24 threads the bilayer; it reads LLIALIALIVLLIIILVVFLY. Residues 25-170 are Virion surface-facing; the sequence is YKKQQPPKKV…LYLPRNHKYA (146 aa).

It belongs to the asfivirus inner membrane protein p22 family.

Its subcellular location is the virion membrane. It is found in the host cell membrane. The protein is Inner membrane protein p22 of Ornithodoros (relapsing fever ticks).